Reading from the N-terminus, the 181-residue chain is Large ribosomal subunit protein uL6 (181 aa).

It belongs to the universal ribosomal protein uL6 family. In terms of assembly, part of the 50S ribosomal subunit.

In terms of biological role, this protein binds to the 23S rRNA, and is important in its secondary structure. It is located near the subunit interface in the base of the L7/L12 stalk, and near the tRNA binding site of the peptidyltransferase center. This is Large ribosomal subunit protein uL6 from Synechococcus sp. (strain JA-3-3Ab) (Cyanobacteria bacterium Yellowstone A-Prime).